Consider the following 464-residue polypeptide: Chaperone SurA (464 aa).

The signal sequence occupies residues 1-25 (MTRYFSIVLSLLLAVSCVFLPVASA). 2 consecutive PpiC domains span residues 175-277 (GAQY…KLVE) and 292-391 (ATEY…QRLG). Residues 439 to 464 (PADDHQTPSAAVIPATGAVLPSATKH) are disordered.

Its subcellular location is the periplasm. It carries out the reaction [protein]-peptidylproline (omega=180) = [protein]-peptidylproline (omega=0). Functionally, chaperone involved in the correct folding and assembly of outer membrane proteins. Recognizes specific patterns of aromatic residues and the orientation of their side chains, which are found more frequently in integral outer membrane proteins. May act in both early periplasmic and late outer membrane-associated steps of protein maturation. This is Chaperone SurA from Xylella fastidiosa (strain 9a5c).